Consider the following 456-residue polypeptide: Chordin-like protein 1 (456 aa).

Positions 1 to 27 (MRKKWKMGGMKYIFSLLFFLLLEGGKT) are cleaved as a signal peptide. VWFC domains lie at 35-100 (TYCM…PRCP) and 113-179 (KSCE…RVCR). A glycan (N-linked (GlcNAc...) asparagine) is linked at Asn118. The Cell attachment site motif lies at 179–181 (RGD). A disordered region spans residues 202–223 (ARHSYHRSHYDPPPSRQAGGLS). A VWFC 3 domain is found at 258–323 (QVCVSNGKTY…IDGKCCKVCP (66 aa)). Asn291 is a glycosylation site (N-linked (GlcNAc...) asparagine).

Expressed in the developing cornea and in the eye anterior segment in addition to the retina. Differentially expressed in the fetal brain. There is high expression in cerebellum and neocortex. Expressed in retinal pericytes.

It localises to the secreted. Functionally, antagonizes the function of BMP4 by binding to it and preventing its interaction with receptors. Alters the fate commitment of neural stem cells from gliogenesis to neurogenesis. Contributes to neuronal differentiation of neural stem cells in the brain by preventing the adoption of a glial fate. May play a crucial role in dorsoventral axis formation. May play a role in embryonic bone formation. May also play an important role in regulating retinal angiogenesis through modulation of BMP4 actions in endothelial cells. Plays a role during anterior segment eye development. This Homo sapiens (Human) protein is Chordin-like protein 1 (CHRDL1).